The primary structure comprises 503 residues: Probable cytosol aminopeptidase (503 aa).

Lys270 and Asp275 together coordinate Mn(2+). Lys282 is a catalytic residue. Asp293, Asp352, and Glu354 together coordinate Mn(2+). Residue Arg356 is part of the active site.

Belongs to the peptidase M17 family. The cofactor is Mn(2+).

It is found in the cytoplasm. The catalysed reaction is Release of an N-terminal amino acid, Xaa-|-Yaa-, in which Xaa is preferably Leu, but may be other amino acids including Pro although not Arg or Lys, and Yaa may be Pro. Amino acid amides and methyl esters are also readily hydrolyzed, but rates on arylamides are exceedingly low.. The enzyme catalyses Release of an N-terminal amino acid, preferentially leucine, but not glutamic or aspartic acids.. Presumably involved in the processing and regular turnover of intracellular proteins. Catalyzes the removal of unsubstituted N-terminal amino acids from various peptides. This is Probable cytosol aminopeptidase from Shigella boydii serotype 4 (strain Sb227).